The primary structure comprises 718 residues: Ribonuclease J (718 aa).

The disordered stretch occupies residues methionine 1–asparagine 130. 2 stretches are compositionally biased toward low complexity: residues alanine 55 to arginine 91 and serine 100 to glycine 118. Zn(2+)-binding residues include histidine 220, histidine 222, aspartate 224, histidine 225, histidine 287, and aspartate 309. Residue histidine 510–histidine 514 coordinates substrate. Histidine 536 contributes to the Zn(2+) binding site.

It belongs to the metallo-beta-lactamase superfamily. RNA-metabolizing metallo-beta-lactamase-like family. Bacterial RNase J subfamily. In terms of assembly, homodimer, may be a subunit of the RNA degradosome. It depends on Zn(2+) as a cofactor.

It is found in the cytoplasm. Its function is as follows. An RNase that has 5'-3' exonuclease and possibly endoonuclease activity. Involved in maturation of rRNA and in some organisms also mRNA maturation and/or decay. The chain is Ribonuclease J from Corynebacterium glutamicum (strain ATCC 13032 / DSM 20300 / JCM 1318 / BCRC 11384 / CCUG 27702 / LMG 3730 / NBRC 12168 / NCIMB 10025 / NRRL B-2784 / 534).